A 295-amino-acid chain; its full sequence is uncharacterized protein (295 aa).

An N-terminal signal peptide occupies residues 1–26 (MKKYLALAAIVAICALWLTQNSNFEA).

This is an uncharacterized protein from Archaeoglobus fulgidus (strain ATCC 49558 / DSM 4304 / JCM 9628 / NBRC 100126 / VC-16).